The primary structure comprises 99 residues: UPF0235 protein PM1313 (99 aa).

Belongs to the UPF0235 family.

The protein is UPF0235 protein PM1313 of Pasteurella multocida (strain Pm70).